The sequence spans 562 residues: Aureusidin synthase (562 aa).

2 disulfides stabilise this stretch: C71/C86 and C85/C148. Cu cation is bound by residues H147, H168, H177, H301, H305, and H335. The 2'-(S-cysteinyl)-histidine (Cys-His) cross-link spans 151-168 (CAGAYNQAGFTNLKLQIH).

It belongs to the tyrosinase family. Monomer. It depends on Cu(2+) as a cofactor. Glycosylated. Post-translationally, contains probably N- and C-terminal propeptides. As to expression, expressed in petals. Not detected in stems and leaves.

Its subcellular location is the vacuole lumen. It carries out the reaction 2',4,4',6'-tetrahydroxychalcone 4'-O-beta-D-glucoside + O2 = aureusidin 6-O-beta-glucoside + H2O. The catalysed reaction is 2 2',3,4,4',6'-pentahydroxychalcone 4'-O-beta-D-glucoside + O2 + 2 H(+) = 2 aureusidin 6-O-beta-glucoside + 2 H2O. The enzyme catalyses 2',3,4,4',6'-pentahydroxychalcone 4'-O-beta-D-glucoside + O2 + H(+) = bracteatin 6-O-beta-glucoside + H2O. With respect to regulation, h(2)O(2) activates the 3-hydroxylation and oxidative cyclization of tetrahydroxychalcone but inhibits reaction with pentahydroxychalcone. Inhibited by phenylthiourea. In terms of biological role, involved in the biosynthesis of aurones, plant flavonoids that provide yellow coloration to flowers. Can use tetrahydroxychalcone (THC), pentahydroxychalcone (PHC), THC 4'-glucoside and PHC 4'-glucoside as substrates, but not 2'-hydroxychalcone, 4-hydroxychalcone, PHC 3-glucoside, 2',6'-dihydroxy-4,4'-dimethoxychalcone, naringenin, eriodictyol and 4,4',6-trihydroxyaurone. Can also produce bracteatin from PHC. This is Aureusidin synthase (AS1) from Antirrhinum majus (Garden snapdragon).